Here is a 302-residue protein sequence, read N- to C-terminus: Vomeronasal type-1 receptor 48 (302 aa).

Residues 1-16 (MNENSRLHTHSNIRNT) lie on the Extracellular side of the membrane. The chain crosses the membrane as a helical span at residues 17-37 (FFSEIGIGISGNSFLLLFHII). At 38–49 (KFFRGHRPRLTD) the chain is on the cytoplasmic side. The helical transmembrane segment at 50–70 (LPIGLLSLIHLLMLLVAAVIA) threads the bilayer. Residues 71–91 (TDIFISWRGWNDIICKFLVYL) are Extracellular-facing. Cysteine 85 and cysteine 172 are oxidised to a cystine. The helical transmembrane segment at 92–114 (YRSLRGLSLCTTSMLSVLQAIIL) threads the bilayer. The Cytoplasmic portion of the chain corresponds to 115–131 (SPRSYCLAKFKRKSSHN). A helical transmembrane segment spans residues 132–152 (ISCAIIFLSVLYMSISSHLLI). The Extracellular portion of the chain corresponds to 153 to 193 (SITATPNLTMNDFLYVSQSCSLLPLSYLMQSIYSTLLVLRE). A glycan (N-linked (GlcNAc...) asparagine) is linked at asparagine 159. The helical transmembrane segment at 194 to 214 (VFLIGLMVLSTSYMVALLYMH) threads the bilayer. The Cytoplasmic segment spans residues 215–238 (RKQAQNLQGTSLSLKASAEQRATQ). Residues 239–259 (TILMLMTFFVLMSIFDSIVSC) traverse the membrane as a helical segment. The Extracellular portion of the chain corresponds to 260–269 (SRTMFLDDPT). A helical membrane pass occupies residues 270-290 (SYSIHIFVMHIYATVSPFVFI). At 291–302 (STEKHIVNILRG) the chain is on the cytoplasmic side.

Belongs to the G-protein coupled receptor 1 family.

The protein localises to the cell membrane. Functionally, putative pheromone receptor implicated in the regulation of social and reproductive behavior. This Mus musculus (Mouse) protein is Vomeronasal type-1 receptor 48 (Vmn1r48).